Reading from the N-terminus, the 208-residue chain is Ribosomal RNA large subunit methyltransferase E (208 aa).

5 residues coordinate S-adenosyl-L-methionine: glycine 63, tryptophan 65, aspartate 83, aspartate 99, and aspartate 124. Residue lysine 164 is the Proton acceptor of the active site.

The protein belongs to the class I-like SAM-binding methyltransferase superfamily. RNA methyltransferase RlmE family.

It localises to the cytoplasm. It catalyses the reaction uridine(2552) in 23S rRNA + S-adenosyl-L-methionine = 2'-O-methyluridine(2552) in 23S rRNA + S-adenosyl-L-homocysteine + H(+). In terms of biological role, specifically methylates the uridine in position 2552 of 23S rRNA at the 2'-O position of the ribose in the fully assembled 50S ribosomal subunit. In Salmonella paratyphi A (strain ATCC 9150 / SARB42), this protein is Ribosomal RNA large subunit methyltransferase E.